The primary structure comprises 238 residues: Protein CPn_0658/CP_0089/CPj0658/CpB0684 (238 aa).

It belongs to the chlamydial CPn_0658/CT_538/TC_0825 family.

This Chlamydia pneumoniae (Chlamydophila pneumoniae) protein is Protein CPn_0658/CP_0089/CPj0658/CpB0684.